A 1258-amino-acid chain; its full sequence is Splicing factor, arginine/serine-rich 19 (1258 aa).

Disordered regions lie at residues 1-32 (MEEE…LSPS), 159-345 (KTVS…PRRR), 370-398 (GGPA…EEEP), 410-1034 (PRQP…PPPM), 1114-1154 (GSLP…DKYL), and 1223-1258 (FRKH…LPPL). A compositionally biased stretch (basic and acidic residues) spans 7–27 (SRGKTEESGEDRGDGPPDRDP). The span at 193–207 (SSASSSPSPSPSSSS) shows a compositional bias: low complexity. Residues 208 to 223 (PSPPPPPPPPPPPALP) are compositionally biased toward pro residues. The span at 228 to 237 (DIYDPFHPTD) shows a compositional bias: basic and acidic residues. Ser-241 is modified (phosphoserine). A compositionally biased stretch (polar residues) spans 256–266 (TGSNPSSSAGT). Over residues 269 to 283 (PEEEEEEEEEEEEEG) the composition is skewed to acidic residues. At Thr-329 the chain carries Phosphothreonine. A compositionally biased stretch (pro residues) spans 374–383 (LPLPPLPPTD). Positions 384 to 395 (PEIEEGEIVQPE) are enriched in acidic residues. Residues 414–426 (PASVATLASVAAP) show a composition bias toward low complexity. A phosphoserine mark is found at Ser-444 and Ser-449. Positions 480-491 (KILTQRRERYRQ) are enriched in basic residues. Phosphoserine is present on residues Ser-493, Ser-495, Ser-512, and Ser-520. Composition is skewed to basic residues over residues 540–555 (TARR…RSRS) and 562–579 (RGSH…RRRS). Ser-579 and Ser-581 each carry phosphoserine. The span at 594-613 (RERHRGKRREGGKKKKKRSR) shows a compositional bias: basic residues. The span at 614–625 (SRAEKRSGDLEK) shows a compositional bias: basic and acidic residues. Thr-665 carries the phosphothreonine modification. Phosphoserine is present on residues Ser-678 and Ser-684. The residue at position 691 (Tyr-691) is a Phosphotyrosine. Phosphoserine is present on residues Ser-693 and Ser-697. 2 stretches are compositionally biased toward basic and acidic residues: residues 698 to 711 (ADER…DRRR) and 721 to 743 (SREK…DRSS). Low complexity-rich tracts occupy residues 752–777 (SAPG…SCSS) and 795–806 (SSTTPAKDSSSS). Residue Lys-814 forms a Glycyl lysine isopeptide (Lys-Gly) (interchain with G-Cter in SUMO2) linkage. Residues 815–833 (FSRDRESRSPFLKPDERAP) show a composition bias toward basic and acidic residues. Phosphoserine is present on residues Ser-821 and Ser-823. The span at 845 to 877 (KPKKTKAKAKAGAKKAKGTKGKTKPSKTRKKVR) shows a compositional bias: basic residues. Residues Ser-878, Ser-885, Ser-912, and Ser-914 each carry the phosphoserine modification. The span at 924 to 937 (STPPPKVAPPPPAL) shows a compositional bias: pro residues. Thr-925 and Thr-938 each carry phosphothreonine. Over residues 940–949 (DSQTVDSSCK) the composition is skewed to polar residues. Position 941 is a phosphoserine (Ser-941). A Phosphothreonine modification is found at Thr-950. The span at 971–986 (EEEEEEEEEEEEEEEQ) shows a compositional bias: acidic residues. Residues 987–1019 (QPATTTATSTAAAAPSTAPSAGSTAGDSGAEDG) are compositionally biased toward low complexity. The necessary for interaction with the CTD domain of POLR2A stretch occupies residues 1133 to 1258 (PASDKREGSS…GGPGLPLPPL (126 aa)). Basic and acidic residues predominate over residues 1135 to 1154 (SDKREGSSSSEGRGDTDKYL). Residues 1246-1258 (PDKGGPGLPLPPL) show a composition bias toward pro residues.

The protein belongs to the splicing factor SR family. In terms of assembly, interacts with POLR2A.

The protein resides in the nucleus. Its function is as follows. May function in pre-mRNA splicing. The polypeptide is Splicing factor, arginine/serine-rich 19 (Scaf1) (Rattus norvegicus (Rat)).